The following is a 370-amino-acid chain: Cobalt-precorrin-5B C(1)-methyltransferase (370 aa).

This sequence belongs to the CbiD family.

The enzyme catalyses Co-precorrin-5B + S-adenosyl-L-methionine = Co-precorrin-6A + S-adenosyl-L-homocysteine. It functions in the pathway cofactor biosynthesis; adenosylcobalamin biosynthesis; cob(II)yrinate a,c-diamide from sirohydrochlorin (anaerobic route): step 6/10. Functionally, catalyzes the methylation of C-1 in cobalt-precorrin-5B to form cobalt-precorrin-6A. The protein is Cobalt-precorrin-5B C(1)-methyltransferase of Prochlorococcus marinus (strain MIT 9215).